A 438-amino-acid polypeptide reads, in one-letter code: Ribosomal protein uS12 methylthiotransferase RimO (438 aa).

Residues 4–120 enclose the MTTase N-terminal domain; the sequence is HSLFLLSLGC…ILASLGARYR (117 aa). The [4Fe-4S] cluster site is built by Cys13, Cys49, Cys83, Cys144, Cys148, and Cys151. The Radical SAM core domain maps to 130–359; the sequence is LTPSHYAYLK…MELQEAVAES (230 aa). The TRAM domain maps to 362–429; the sequence is REFEGKEIEV…AHELYGEIVQ (68 aa).

This sequence belongs to the methylthiotransferase family. RimO subfamily. [4Fe-4S] cluster is required as a cofactor.

It is found in the cytoplasm. The catalysed reaction is L-aspartate(89)-[ribosomal protein uS12]-hydrogen + (sulfur carrier)-SH + AH2 + 2 S-adenosyl-L-methionine = 3-methylsulfanyl-L-aspartate(89)-[ribosomal protein uS12]-hydrogen + (sulfur carrier)-H + 5'-deoxyadenosine + L-methionine + A + S-adenosyl-L-homocysteine + 2 H(+). Its function is as follows. Catalyzes the methylthiolation of an aspartic acid residue of ribosomal protein uS12. The sequence is that of Ribosomal protein uS12 methylthiotransferase RimO from Chlorobium chlorochromatii (strain CaD3).